Here is a 1198-residue protein sequence, read N- to C-terminus: Structural polyprotein (1198 aa).

Positions 2–15 (TKKPGGPGKNRAIN) are interaction with host EXOC1. The hydrophobic; homodimerization of capsid protein C stretch occupies residues 37–72 (LLDGRGPVRFVLALITFFKFTALAPTKALLGRWRAV). The propeptide at 106–127 (GGNESSIMWLASLAIVIACAGA) is ER anchor for the capsid protein C, removed in mature form by serine protease NS3. Residues 110 to 130 (SSIMWLASLAIVIACAGAMKL) traverse the membrane as a helical segment. An N-linked (GlcNAc...) asparagine; by host glycan is attached at asparagine 142. The next 2 helical transmembrane spans lie at 254–274 (WIIR…MLGS) and 280–294 (VVFT…PAYS). 6 disulfide bridges follow: cysteine 297–cysteine 324, cysteine 354–cysteine 410, cysteine 354–cysteine 415, cysteine 368–cysteine 399, cysteine 386–cysteine 410, and cysteine 386–cysteine 415. The tract at residues 392–405 (DRGWGNGCGLFGKG) is fusion peptide. An N-linked (GlcNAc...) asparagine; by host glycan is attached at asparagine 448. 2 cysteine pairs are disulfide-bonded: cysteine 484-cysteine 581 and cysteine 598-cysteine 629. The next 2 membrane-spanning stretches (helical) occupy residues 747–767 (FGGM…WMGV) and 774–794 (IALA…NVHA). Cystine bridges form between cysteine 798/cysteine 809, cysteine 849/cysteine 937, cysteine 973/cysteine 1017, cysteine 1074/cysteine 1123, cysteine 1085/cysteine 1106, and cysteine 1107/cysteine 1110. 2 N-linked (GlcNAc...) asparagine; by host glycosylation sites follow: asparagine 924 and asparagine 1001. The disordered stretch occupies residues 1151-1178 (MIDPFSAGPSGDVSGHPGGPSQEVDGQI).

As to quaternary structure, homodimer. Interacts (via N-terminus) with host EXOC1 (via C-terminus); this interaction results in EXOC1 degradation through the proteasome degradation pathway. Interacts with host CAPRIN1; this interaction is involved in the suppression of the integrated stress response. In terms of assembly, forms heterodimers with envelope protein E in the endoplasmic reticulum and Golgi. Homodimer; in the endoplasmic reticulum and Golgi. Interacts with protein prM. Interacts with non-structural protein 1. In terms of processing, genome polyprotein: Specific enzymatic cleavages in vivo yield mature proteins. Cleavages in the lumen of endoplasmic reticulum are performed by host signal peptidase, whereas cleavages in the cytoplasmic side are performed by serine protease NS3. Signal cleavage at the 2K-4B site requires a prior NS3 protease-mediated cleavage at the 4A-2K site. Post-translationally, cleaved in post-Golgi vesicles by a host furin, releasing the mature small envelope protein M, and peptide pr. This cleavage is incomplete as up to 30% of viral particles still carry uncleaved prM. N-glycosylated.

The protein resides in the secreted. Its subcellular location is the virion membrane. The protein localises to the host endoplasmic reticulum membrane. In terms of biological role, plays a role in virus budding by binding to the cell membrane and gathering the viral RNA into a nucleocapsid that forms the core of a mature virus particle. During virus entry, may induce genome penetration into the host cytoplasm after hemifusion induced by the surface proteins. Can migrate to the cell nucleus where it modulates host functions. Overcomes the anti-viral effects of host EXOC1 by sequestering and degrading the latter through the proteasome degradation pathway. Inhibits the integrated stress response (ISR) in the infected cell by binding to host CAPRIN1. Inhibits RNA silencing by interfering with host Dicer. Its function is as follows. Prevents premature fusion activity of envelope proteins in trans-Golgi by binding to envelope protein E at pH6.0. After virion release in extracellular space, gets dissociated from E dimers. Functionally, acts as a chaperone for envelope protein E during intracellular virion assembly by masking and inactivating envelope protein E fusion peptide. prM is the only viral peptide matured by host furin in the trans-Golgi network probably to avoid catastrophic activation of the viral fusion activity in acidic Golgi compartment prior to virion release. prM-E cleavage is inefficient, and many virions are only partially matured. These uncleaved prM would play a role in immune evasion. In terms of biological role, may play a role in virus budding. Exerts cytotoxic effects by activating a mitochondrial apoptotic pathway through M ectodomain. May display a viroporin activity. Binds to host cell surface receptor and mediates fusion between viral and cellular membranes. Envelope protein is synthesized in the endoplasmic reticulum in the form of heterodimer with protein prM. They play a role in virion budding in the ER, and the newly formed immature particle is covered with 60 spikes composed of heterodimer between precursor prM and envelope protein E. The virion is transported to the Golgi apparatus where the low pH causes dissociation of PrM-E heterodimers and formation of E homodimers. prM-E cleavage is inefficient, and many virions are only partially matured. These uncleaved prM would play a role in immune evasion. This is Structural polyprotein from Ardeidae (herons).